The following is a 985-amino-acid chain: MIRHAGAPARGDPTGPVPVVGKGEEEEEEDGMRLCLPANPKNCLPHRRGISILEKLIKTCPVWLQLSLGQAEVARILHRVVAGMFLVRRDSSSKQLVLCVHFPSLNESSAEVLEYTIKEEKSILYLEGSALVFEDIFRLIAFYCVSRDLLPFTLRLPQAILEASSFTDLETIANLGLGFWDSSLNPPQERGKPAEPPRDRAPGFPLVSSLRPTAHDANCACEIELSVGNDRLWFVNPIFIEDCSSALPTDQPPLGNCPARPLPPTSDATSPTSRWAPRRPPPPPPVLPLQPCSPAQPPVLPALAPAPACPLPTSPPVPAPHVTPHAPGPPDHPNQPPMMTCERLPCPTAGLGPLREEAMKPGAASSPLQQVPAPPLPAKKNLPTAPPRRRVSERVSLEDQSPGMAAEGDQLSLPPQGTSDGPEDTPRESTEQGQDTEVKASDPHSMPELPRTAKQPPVPPPRKKRISRQLASTLPAPLENAELCTQAMALETPTPGPPREGQSPASQAGTQHPPAQATAHSQSSPEFKGSLASLSDSLGVSVMATDQDSYSTSSTEEELEQFSSPSVKKKPSMILGKARHRLSFASFSSMFHAFLSNNRKLYKKVVELAQDKGSYFGSLVQDYKVYSLEMMARQTSSTEMLQEIRTMMTQLKSYLLQSTELKALVDPALHSEEELEAIVESALYKCVLKPLKEAINSCLHQIHSKDGSLQQLKENQLVILATTTTDLGVTTSVPEVPMMEKILQKFTSMHKAYSPEKKISILLKTCKLIYDSMALGNPGKPYGADDFLPVLMYVLARSNLTEMLLNVEYMMELMDPALQLGEGSYYLTTTYGALEHIKSYDKITVTRQLSVEVQDSIHRWERRRTLNKARASRSSVQDFICVSYLEPEQQARTLASRADTQAQALCAQCAEKFAVERPQAHRLFVLVDGRCFQLADDALPHCIKGYLLRSEPKRDFHFVYRPLDGGGGGGGGSPPCLVVREPNFL.

Residues 1–24 form a disordered region; the sequence is MIRHAGAPARGDPTGPVPVVGKGE. Residues 63-158 enclose the SH2 domain; it reads WLQLSLGQAE…LLPFTLRLPQ (96 aa). 3 disordered regions span residues 183 to 202, 251 to 293, and 315 to 531; these read SLNPPQERGKPAEPPRDRAP, QPPL…QPCS, and PPVP…KGSL. Basic and acidic residues predominate over residues 189–201; it reads ERGKPAEPPRDRA. Composition is skewed to pro residues over residues 278–288 and 315–336; these read RRPPPPPPVLP and PPVPAPHVTPHAPGPPDHPNQP. The segment covering 424–442 has biased composition (basic and acidic residues); sequence DTPRESTEQGQDTEVKASD. Positions 587–732 are interaction with RAB5B; that stretch reads FSSMFHAFLS…TTTDLGVTTS (146 aa). Positions 703–846 constitute a VPS9 domain; the sequence is HSKDGSLQQL…IKSYDKITVT (144 aa). The 87-residue stretch at 877–963 folds into the Ras-associating domain; that stretch reads QDFICVSYLE…RDFHFVYRPL (87 aa).

It belongs to the RIN (Ras interaction/interference) family. As to quaternary structure, interacts with CD2AP, RAB5B, RAB31 and BIN1. Widely expressed.

It localises to the cytoplasm. The protein localises to the cytoplasmic vesicle. Its subcellular location is the early endosome. Ras effector protein that functions as a guanine nucleotide exchange (GEF) for RAB5B and RAB31, by exchanging bound GDP for free GTP. Required for normal RAB31 function. The protein is Ras and Rab interactor 3 (RIN3) of Homo sapiens (Human).